The chain runs to 350 residues: Ferredoxin--NADP reductase (350 aa).

FAD-binding residues include Thr-25, Glu-44, Gln-52, Tyr-57, Val-97, Phe-132, Asp-298, and Ser-339.

This sequence belongs to the ferredoxin--NADP reductase type 2 family. As to quaternary structure, homodimer. It depends on FAD as a cofactor.

The enzyme catalyses 2 reduced [2Fe-2S]-[ferredoxin] + NADP(+) + H(+) = 2 oxidized [2Fe-2S]-[ferredoxin] + NADPH. This is Ferredoxin--NADP reductase from Chlorobium limicola (strain DSM 245 / NBRC 103803 / 6330).